We begin with the raw amino-acid sequence, 177 residues long: ATP synthase subunit delta (177 aa).

This sequence belongs to the ATPase delta chain family. As to quaternary structure, F-type ATPases have 2 components, F(1) - the catalytic core - and F(0) - the membrane proton channel. F(1) has five subunits: alpha(3), beta(3), gamma(1), delta(1), epsilon(1). F(0) has three main subunits: a(1), b(2) and c(10-14). The alpha and beta chains form an alternating ring which encloses part of the gamma chain. F(1) is attached to F(0) by a central stalk formed by the gamma and epsilon chains, while a peripheral stalk is formed by the delta and b chains.

Its subcellular location is the cell inner membrane. In terms of biological role, f(1)F(0) ATP synthase produces ATP from ADP in the presence of a proton or sodium gradient. F-type ATPases consist of two structural domains, F(1) containing the extramembraneous catalytic core and F(0) containing the membrane proton channel, linked together by a central stalk and a peripheral stalk. During catalysis, ATP synthesis in the catalytic domain of F(1) is coupled via a rotary mechanism of the central stalk subunits to proton translocation. Its function is as follows. This protein is part of the stalk that links CF(0) to CF(1). It either transmits conformational changes from CF(0) to CF(1) or is implicated in proton conduction. In Psychromonas ingrahamii (strain DSM 17664 / CCUG 51855 / 37), this protein is ATP synthase subunit delta.